We begin with the raw amino-acid sequence, 458 residues long: 3-isopropylmalate dehydratase large subunit (458 aa).

[4Fe-4S] cluster-binding residues include Cys339, Cys399, and Cys402.

Belongs to the aconitase/IPM isomerase family. LeuC type 1 subfamily. In terms of assembly, heterodimer of LeuC and LeuD. [4Fe-4S] cluster is required as a cofactor.

The enzyme catalyses (2R,3S)-3-isopropylmalate = (2S)-2-isopropylmalate. It functions in the pathway amino-acid biosynthesis; L-leucine biosynthesis; L-leucine from 3-methyl-2-oxobutanoate: step 2/4. In terms of biological role, catalyzes the isomerization between 2-isopropylmalate and 3-isopropylmalate, via the formation of 2-isopropylmaleate. The protein is 3-isopropylmalate dehydratase large subunit of Lactococcus lactis subsp. cremoris (strain MG1363).